A 371-amino-acid chain; its full sequence is tRNA-specific 2-thiouridylase MnmA (371 aa).

ATP-binding positions include 14–21 (GMSGGVDS) and M40. An interaction with target base in tRNA region spans residues 100-102 (NPD). Residue C105 is the Nucleophile of the active site. C105 and C201 form a disulfide bridge. G129 provides a ligand contact to ATP. Positions 151–153 (KDQ) are interaction with tRNA. Catalysis depends on C201, which acts as the Cysteine persulfide intermediate. The interaction with tRNA stretch occupies residues 309-310 (RY).

This sequence belongs to the MnmA/TRMU family.

It is found in the cytoplasm. The catalysed reaction is S-sulfanyl-L-cysteinyl-[protein] + uridine(34) in tRNA + AH2 + ATP = 2-thiouridine(34) in tRNA + L-cysteinyl-[protein] + A + AMP + diphosphate + H(+). In terms of biological role, catalyzes the 2-thiolation of uridine at the wobble position (U34) of tRNA, leading to the formation of s(2)U34. This chain is tRNA-specific 2-thiouridylase MnmA, found in Halalkalibacterium halodurans (strain ATCC BAA-125 / DSM 18197 / FERM 7344 / JCM 9153 / C-125) (Bacillus halodurans).